A 309-amino-acid chain; its full sequence is Ribose-phosphate pyrophosphokinase (309 aa).

ATP contacts are provided by residues 42-44 and 102-103; these read DEE and RQ. The Mg(2+) site is built by His-136 and Asp-175. The active site involves Lys-199. D-ribose 5-phosphate-binding positions include Arg-201, Asp-226, and 230-234; that span reads STGGT.

Belongs to the ribose-phosphate pyrophosphokinase family. Class III (archaeal) subfamily. It depends on Mg(2+) as a cofactor.

It localises to the cytoplasm. It catalyses the reaction D-ribose 5-phosphate + ATP = 5-phospho-alpha-D-ribose 1-diphosphate + AMP + H(+). The protein operates within metabolic intermediate biosynthesis; 5-phospho-alpha-D-ribose 1-diphosphate biosynthesis; 5-phospho-alpha-D-ribose 1-diphosphate from D-ribose 5-phosphate (route I): step 1/1. Its function is as follows. Involved in the biosynthesis of the central metabolite phospho-alpha-D-ribosyl-1-pyrophosphate (PRPP) via the transfer of pyrophosphoryl group from ATP to 1-hydroxyl of ribose-5-phosphate (Rib-5-P). The polypeptide is Ribose-phosphate pyrophosphokinase (Aeropyrum pernix (strain ATCC 700893 / DSM 11879 / JCM 9820 / NBRC 100138 / K1)).